The primary structure comprises 260 residues: PsbP domain-containing protein 4, chloroplastic (260 aa).

It belongs to the PsbP family.

Its subcellular location is the plastid. It localises to the chloroplast thylakoid lumen. This chain is PsbP domain-containing protein 4, chloroplastic (PPD4), found in Arabidopsis thaliana (Mouse-ear cress).